We begin with the raw amino-acid sequence, 269 residues long: Phosphate import ATP-binding protein PstB (269 aa).

Residues 14-253 (LSLENVSISY…EFNSTKKIFN (240 aa)) enclose the ABC transporter domain. 46-53 (GPSGCGKS) serves as a coordination point for ATP.

Belongs to the ABC transporter superfamily. Phosphate importer (TC 3.A.1.7) family. In terms of assembly, the complex is composed of two ATP-binding proteins (PstB), two transmembrane proteins (PstC and PstA) and a solute-binding protein (PstS).

It localises to the cell inner membrane. The enzyme catalyses phosphate(out) + ATP + H2O = ADP + 2 phosphate(in) + H(+). Part of the ABC transporter complex PstSACB involved in phosphate import. Responsible for energy coupling to the transport system. This is Phosphate import ATP-binding protein PstB from Prochlorococcus marinus (strain MIT 9312).